A 205-amino-acid polypeptide reads, in one-letter code: GTP cyclohydrolase 1 (205 aa).

The Zn(2+) site is built by C93, H96, and C166.

The protein belongs to the GTP cyclohydrolase I family. As to quaternary structure, homomer.

The catalysed reaction is GTP + H2O = 7,8-dihydroneopterin 3'-triphosphate + formate + H(+). It functions in the pathway cofactor biosynthesis; 7,8-dihydroneopterin triphosphate biosynthesis; 7,8-dihydroneopterin triphosphate from GTP: step 1/1. This Mycobacterium leprae (strain Br4923) protein is GTP cyclohydrolase 1.